Here is a 284-residue protein sequence, read N- to C-terminus: Protein phosphatase 1 regulatory subunit 3B (284 aa).

The PP1-binding motif signature appears at 61–64; that stretch reads RVSF. The CBM21 domain maps to 124–232; sequence RNRLQTNHVC…SNKGKNYRIT (109 aa). At Ser-260 the chain carries Phosphoserine.

In terms of assembly, interacts with glycogen, PPP1CC catalytic subunit of PP1 and PYGL. Associates with glycogen particles. Forms complexes with debranching enzyme, glycogen phosphorylase, glycogen synthase and phosphorylase kinase which is necessary for its regulation of PP1 activity. As to expression, highly expressed in liver (at protein level). Expressed predominantly in liver. Expressed moderately in heart. Expressed weakly in prostate, stomach, thyroid, lung, kidney, spleen and skeletal muscle.

Its function is as follows. Acts as a glycogen-targeting subunit for phosphatase PP1. Facilitates interaction of the PP1 with enzymes of the glycogen metabolism and regulates its activity. Suppresses the rate at which PP1 dephosphorylates (inactivates) glycogen phosphorylase and enhances the rate at which it activates glycogen synthase and therefore limits glycogen breakdown. Its activity is inhibited by PYGL, resulting in inhibition of the glycogen synthase and glycogen phosphorylase phosphatase activities of PP1. Dramatically increases basal and insulin-stimulated glycogen synthesis upon overexpression in hepatocytes. The polypeptide is Protein phosphatase 1 regulatory subunit 3B (Ppp1r3b) (Mus musculus (Mouse)).